The primary structure comprises 388 residues: Beta-hexosaminidase LpqI (388 aa).

A signal peptide spans 1–19; that stretch reads MAFPRTLAILAAAAALVVA. Cys20 is lipidated: N-palmitoyl cysteine. A lipid anchor (S-diacylglycerol cysteine) is attached at Cys20. Residues Asp123, Arg131, Arg193, and 223–224 each bind substrate; that span reads KH. His236 (proton donor/acceptor) is an active-site residue. Asp311 (nucleophile) is an active-site residue.

Belongs to the glycosyl hydrolase 3 family.

The protein resides in the cell inner membrane. It carries out the reaction Hydrolysis of terminal non-reducing N-acetyl-D-hexosamine residues in N-acetyl-beta-D-hexosaminides.. Its pathway is cell wall biogenesis; peptidoglycan recycling. Functionally, plays a role in peptidoglycan recycling by cleaving the terminal beta-1,4-linked N-acetylglucosamine (GlcNAc) from peptidoglycan fragments. Acts as a regulator for GlcNAc-MurNAc levels by cleaving disaccharides and allowing the breakdown of MurNAc. This Mycobacterium tuberculosis (strain ATCC 25618 / H37Rv) protein is Beta-hexosaminidase LpqI.